A 552-amino-acid polypeptide reads, in one-letter code: Keratin, type II cytoskeletal 6A (552 aa).

Positions 1–14 (MSTKTVIRSQTSHR) are enriched in polar residues. A disordered region spans residues 1–21 (MSTKTVIRSQTSHRGFSAGSA). Positions 1-151 (MSTKTVIRSQ…DPTIQRVRTE (151 aa)) are head. Positions 152–187 (EREQIKTLNNKFASFIDKVRFLEQQNKVLDTKWALL) are coil 1A. One can recognise an IF rod domain in the interval 152–465 (EREQIKTLNN…TLLEGEECRL (314 aa)). The linker 1 stretch occupies residues 188–206 (QEQGTKTVRQGLETLFEQY). The segment at 207–298 (INDLRKELDN…ALYEAELSQM (92 aa)) is coil 1B. The linker 12 stretch occupies residues 299–322 (QTHISDTSVVLSMDNNRSLDLDSI). Residues 323–461 (IAEVKAQYEE…ATYRTLLEGE (139 aa)) are coil 2. Residues 462 to 552 (ECRLNGEGVG…TSSTRKSYRP (91 aa)) are tail. Residues 524–552 (ISSGLSSSGGSSSTIKYTTTSSTRKSYRP) are disordered. Low complexity predominate over residues 525 to 552 (SSGLSSSGGSSSTIKYTTTSSTRKSYRP).

Belongs to the intermediate filament family. In terms of assembly, heterodimer of a type I and a type II keratin. KRT6 isomers associate with KRT16 and/or KRT17. Interacts with TCHP.

Its function is as follows. Epidermis-specific type I keratin involved in wound healing. Involved in the activation of follicular keratinocytes after wounding, while it does not play a major role in keratinocyte proliferation or migration. Participates in the regulation of epithelial migration by inhibiting the activity of SRC during wound repair. This Rattus norvegicus (Rat) protein is Keratin, type II cytoskeletal 6A (Krt6a).